The following is a 260-amino-acid chain: Global transcriptional regulator CodY (260 aa).

Residues 1–159 (MPNLLEKTRK…SSTVVGIQLL (159 aa)) form a GAF domain region. Residues 207–226 (ASVIADRIGITRSVIVNALR) constitute a DNA-binding region (H-T-H motif).

The protein belongs to the CodY family.

It is found in the cytoplasm. Functionally, DNA-binding global transcriptional regulator which is involved in the adaptive response to starvation and acts by directly or indirectly controlling the expression of numerous genes in response to nutrient availability. During rapid exponential growth, CodY is highly active and represses genes whose products allow adaptation to nutrient depletion. The chain is Global transcriptional regulator CodY from Streptococcus equi subsp. zooepidemicus (strain H70).